A 396-amino-acid polypeptide reads, in one-letter code: Phosphoglycerate kinase (396 aa).

Substrate is bound by residues 23 to 25, Arg-38, 61 to 64, Arg-122, and Arg-155; these read DFN and HMGK. ATP is bound by residues Lys-206, Gly-296, Glu-327, and 353–356; that span reads GGDS.

This sequence belongs to the phosphoglycerate kinase family. Monomer.

The protein resides in the cytoplasm. The enzyme catalyses (2R)-3-phosphoglycerate + ATP = (2R)-3-phospho-glyceroyl phosphate + ADP. The protein operates within carbohydrate degradation; glycolysis; pyruvate from D-glyceraldehyde 3-phosphate: step 2/5. This chain is Phosphoglycerate kinase, found in Clostridium botulinum (strain Alaska E43 / Type E3).